A 199-amino-acid chain; its full sequence is Fe/S biogenesis protein NfuA (199 aa).

2 residues coordinate [4Fe-4S] cluster: C151 and C154.

This sequence belongs to the NfuA family. Homodimer. [4Fe-4S] cluster serves as cofactor.

Its function is as follows. Involved in iron-sulfur cluster biogenesis. Binds a 4Fe-4S cluster, can transfer this cluster to apoproteins, and thereby intervenes in the maturation of Fe/S proteins. Could also act as a scaffold/chaperone for damaged Fe/S proteins. In Xanthomonas oryzae pv. oryzae (strain MAFF 311018), this protein is Fe/S biogenesis protein NfuA.